The chain runs to 132 residues: MAGQTFLHRIGTDLVHIPRIEGMLERYGKQFLNRVYTEGEQHYCLASKPHRANRLAGRWAAKEAVTKALGTGWRGVGYRDIEVVRLASGEPTICLNGRAVLLVERFGRLDWQVSFSHDREYAVATVSVIGFF.

The Mg(2+) site is built by Asp13 and Glu63.

It belongs to the P-Pant transferase superfamily. AcpS family. The cofactor is Mg(2+).

It localises to the cytoplasm. It carries out the reaction apo-[ACP] + CoA = holo-[ACP] + adenosine 3',5'-bisphosphate + H(+). Functionally, transfers the 4'-phosphopantetheine moiety from coenzyme A to a Ser of acyl-carrier-protein. The chain is Holo-[acyl-carrier-protein] synthase from Gloeobacter violaceus (strain ATCC 29082 / PCC 7421).